Reading from the N-terminus, the 225-residue chain is T4 protein (225 aa).

This sequence belongs to the poxviruses B9 family.

In Rabbit fibroma virus (strain Kasza) (RFV), this protein is T4 protein.